We begin with the raw amino-acid sequence, 560 residues long: MNNHTDALTKQVFTIVSELYAYGIREVVISPGSRSTPLAIAIEAHPKLKSWIHPDERSAAFFAMGLMKGSEKPVAILCTSGSAAANYTPAISESSLSHLPLVVLTSDRPHELRGIGAPQAINQTNMFANYVQYQFDFPIAEKNDNEDIMANTIKFQLQKASQFLYGPHRGPIHLNLPFREPLTPNTEKVEWLTSDTKILPHYQKTTSLNEISAMMKKRKGLIIVGDMQHQDVDQILTFSTIHDMPILADPLSQLRREHHPNVVTTYDLLLRSGLELEADFVIRVGKPVISKKLNQWLKVTEAFQILVQNNDRPDAFPITPHVSYEMSANDFFRQLSEMPTVERKQWLEKWQTVEKHAIVEIKDHLRTATDEAAYVGNVLDKLTKDDAIFVSNSMPIRDVDNLFIDCEAEVFANRGANGIDGVTSTALGMAVHKKITLLIGDLAFYHDMNGLLMSKLNDIQLNIVLLNNDGGGIFSYLPQKNEADAYFERLFGTPTGLNFEHTALLYDFAFDRFDTIEAFKYADLSQFGSHIYEIMTHREDNKQQHLKLYKKLSDIIDVTL.

It belongs to the TPP enzyme family. MenD subfamily. As to quaternary structure, homodimer. Mg(2+) is required as a cofactor. Requires Mn(2+) as cofactor. Thiamine diphosphate serves as cofactor.

It catalyses the reaction isochorismate + 2-oxoglutarate + H(+) = 5-enolpyruvoyl-6-hydroxy-2-succinyl-cyclohex-3-ene-1-carboxylate + CO2. It participates in quinol/quinone metabolism; 1,4-dihydroxy-2-naphthoate biosynthesis; 1,4-dihydroxy-2-naphthoate from chorismate: step 2/7. It functions in the pathway quinol/quinone metabolism; menaquinone biosynthesis. Its function is as follows. Catalyzes the thiamine diphosphate-dependent decarboxylation of 2-oxoglutarate and the subsequent addition of the resulting succinic semialdehyde-thiamine pyrophosphate anion to isochorismate to yield 2-succinyl-5-enolpyruvyl-6-hydroxy-3-cyclohexene-1-carboxylate (SEPHCHC). This is 2-succinyl-5-enolpyruvyl-6-hydroxy-3-cyclohexene-1-carboxylate synthase from Staphylococcus saprophyticus subsp. saprophyticus (strain ATCC 15305 / DSM 20229 / NCIMB 8711 / NCTC 7292 / S-41).